The primary structure comprises 571 residues: Proline--tRNA ligase (571 aa).

This sequence belongs to the class-II aminoacyl-tRNA synthetase family. ProS type 1 subfamily. Homodimer.

It localises to the cytoplasm. It carries out the reaction tRNA(Pro) + L-proline + ATP = L-prolyl-tRNA(Pro) + AMP + diphosphate. Its function is as follows. Catalyzes the attachment of proline to tRNA(Pro) in a two-step reaction: proline is first activated by ATP to form Pro-AMP and then transferred to the acceptor end of tRNA(Pro). As ProRS can inadvertently accommodate and process non-cognate amino acids such as alanine and cysteine, to avoid such errors it has two additional distinct editing activities against alanine. One activity is designated as 'pretransfer' editing and involves the tRNA(Pro)-independent hydrolysis of activated Ala-AMP. The other activity is designated 'posttransfer' editing and involves deacylation of mischarged Ala-tRNA(Pro). The misacylated Cys-tRNA(Pro) is not edited by ProRS. The chain is Proline--tRNA ligase from Mannheimia succiniciproducens (strain KCTC 0769BP / MBEL55E).